A 101-amino-acid chain; its full sequence is NAD(P)H-quinone oxidoreductase subunit 4L, chloroplastic (101 aa).

The next 3 helical transmembrane spans lie at 2–22, 32–52, and 61–81; these read ILEH…YGLI, MCLE…SDFF, and IFCI…LAIV.

This sequence belongs to the complex I subunit 4L family. NDH is composed of at least 16 different subunits, 5 of which are encoded in the nucleus.

It is found in the plastid. The protein resides in the chloroplast thylakoid membrane. The catalysed reaction is a plastoquinone + NADH + (n+1) H(+)(in) = a plastoquinol + NAD(+) + n H(+)(out). It catalyses the reaction a plastoquinone + NADPH + (n+1) H(+)(in) = a plastoquinol + NADP(+) + n H(+)(out). In terms of biological role, NDH shuttles electrons from NAD(P)H:plastoquinone, via FMN and iron-sulfur (Fe-S) centers, to quinones in the photosynthetic chain and possibly in a chloroplast respiratory chain. The immediate electron acceptor for the enzyme in this species is believed to be plastoquinone. Couples the redox reaction to proton translocation, and thus conserves the redox energy in a proton gradient. The chain is NAD(P)H-quinone oxidoreductase subunit 4L, chloroplastic from Draba nemorosa (Woodland whitlowgrass).